The sequence spans 683 residues: Pre-mRNA-splicing factor CLF1 (683 aa).

13 HAT repeats span residues 40 to 72, 74 to 106, 108 to 140, 142 to 173, 175 to 206, 291 to 323, 336 to 367, 374 to 407, 409 to 440, 442 to 474, 476 to 513, 515 to 547, and 582 to 620; these read DWQRRKRSEFEEALKRNRLDVRQWLRYAAFEYE, RDMRRARSVFERALAVAPGDVVVWLRYVDCELR, RDVNHARNLLVRATALLPRVDKLWYKYVLMEES, GQVELVRGVYTKWCTLEPAAAAWDAFVDFETR, GQVEHVREVYSRYVMVHPVAATWLKWVAFERK, SILFKRKREYEEQLLAHPLDYDAWWLYLDLLEE, ATVKAVPRSQEKDMQWRKYVNLWLRYLLFLET, LTRSMYQKLVREVIPNTKFTFAKAWIMYAEFEIR, EKLDKARKILGMSLGMCPKPKLFQYYIDLEIK, KEFDRVRRLHEKLLEFQPDVLSNWIEYAELEEN, GDEDRARGIYEIGLTADGGLSQARQLQLMQRYIQFETD, SEFERARALYSRYVALSGYDPNVWISCALYESS, and ENKEQTRAIFEKALRHYTSEKDDEGRILVLQAYKDYESI.

Belongs to the crooked-neck family. Associated with the spliceosome.

The protein resides in the nucleus. Its function is as follows. Involved in pre-mRNA splicing and cell cycle progression. Required for the spliceosome assembly and initiation of the DNA replication. The sequence is that of Pre-mRNA-splicing factor CLF1 (CLF1) from Eremothecium gossypii (strain ATCC 10895 / CBS 109.51 / FGSC 9923 / NRRL Y-1056) (Yeast).